A 67-amino-acid chain; its full sequence is Large ribosomal subunit protein uL29 (67 aa).

This sequence belongs to the universal ribosomal protein uL29 family.

The polypeptide is Large ribosomal subunit protein uL29 (Staphylothermus marinus (strain ATCC 43588 / DSM 3639 / JCM 9404 / F1)).